The chain runs to 439 residues: Serine hydroxymethyltransferase (439 aa).

127–129 (AHV) is a binding site for (6S)-5,6,7,8-tetrahydrofolate. Position 233 is an N6-(pyridoxal phosphate)lysine (Lys233).

This sequence belongs to the SHMT family. In terms of assembly, homodimer. Requires pyridoxal 5'-phosphate as cofactor.

Its subcellular location is the cytoplasm. It functions in the pathway amino-acid biosynthesis; glycine biosynthesis; glycine from L-serine: step 1/1. Its function is as follows. Catalyzes the reversible interconversion of serine and glycine with a modified folate serving as the one-carbon carrier. Also exhibits a pteridine-independent aldolase activity toward beta-hydroxyamino acids, producing glycine and aldehydes, via a retro-aldol mechanism. This chain is Serine hydroxymethyltransferase, found in Aeropyrum pernix (strain ATCC 700893 / DSM 11879 / JCM 9820 / NBRC 100138 / K1).